The sequence spans 446 residues: Chromosomal replication initiator protein DnaA (446 aa).

The segment at 1–92 is domain I, interacts with DnaA modulators; that stretch reads MENISDLWNS…SQAEEEIDLP (92 aa). Residues 93 to 109 are domain II; sequence PAKPNAAQDDSNHLPQS. The tract at residues 110–326 is domain III, AAA+ region; it reads MLNPKYTFDT…GALIRVVAYS (217 aa). 4 residues coordinate ATP: glycine 154, glycine 156, lysine 157, and threonine 158. Residues 327-446 are domain IV, binds dsDNA; that stretch reads SLINKDINAD…QVEEINDILK (120 aa).

It belongs to the DnaA family. As to quaternary structure, oligomerizes as a right-handed, spiral filament on DNA at oriC.

It localises to the cytoplasm. Its function is as follows. Plays an essential role in the initiation and regulation of chromosomal replication. ATP-DnaA binds to the origin of replication (oriC) to initiate formation of the DNA replication initiation complex once per cell cycle. Binds the DnaA box (a 9 base pair repeat at the origin) and separates the double-stranded (ds)DNA. Forms a right-handed helical filament on oriC DNA; dsDNA binds to the exterior of the filament while single-stranded (ss)DNA is stabiized in the filament's interior. The ATP-DnaA-oriC complex binds and stabilizes one strand of the AT-rich DNA unwinding element (DUE), permitting loading of DNA polymerase. After initiation quickly degrades to an ADP-DnaA complex that is not apt for DNA replication. Binds acidic phospholipids. This chain is Chromosomal replication initiator protein DnaA, found in Bacillus anthracis (strain A0248).